We begin with the raw amino-acid sequence, 207 residues long: Putative 3-methyladenine DNA glycosylase (207 aa).

The protein belongs to the DNA glycosylase MPG family.

The protein is Putative 3-methyladenine DNA glycosylase of Koribacter versatilis (strain Ellin345).